Here is a 277-residue protein sequence, read N- to C-terminus: Phosphate import ATP-binding protein PstB (277 aa).

The region spanning 31–272 (IEVPGLSLYY…PAKKQTEDYI (242 aa)) is the ABC transporter domain. ATP is bound at residue 63–70 (GPSGCGKS).

The protein belongs to the ABC transporter superfamily. Phosphate importer (TC 3.A.1.7) family. As to quaternary structure, the complex is composed of two ATP-binding proteins (PstB), two transmembrane proteins (PstC and PstA) and a solute-binding protein (PstS).

It localises to the cell inner membrane. It catalyses the reaction phosphate(out) + ATP + H2O = ADP + 2 phosphate(in) + H(+). Part of the ABC transporter complex PstSACB involved in phosphate import. Responsible for energy coupling to the transport system. The chain is Phosphate import ATP-binding protein PstB from Pseudomonas fluorescens (strain ATCC BAA-477 / NRRL B-23932 / Pf-5).